We begin with the raw amino-acid sequence, 580 residues long: MHNVNTTTTGLSLAKILASTELGDNTIQAGNDAANKLFSLTIADLTANKNINTTNAHSTSNILIPELKAPKSLNASSQLTLLIGNLIQILGEKSLTALTNKITAWKSQQQARQQKNLEFSDKINTLLSETEGLTRDYEKQINKLKNADSKIKDLENKINQIQTRLSELDPDSPEKKKLSREEIQLTIKKDAAVKDRTLIEQKTLSIHSKLTDKSMQLEKEIDSFSAFSNTASAEQLSTQQKSLTGLASVTQLMATFIQLVGKNNEESLKNDLALFQSLQESRKTEMERKSDEYAAEVRKAEELNRVMGCVGKILGALLTIVSVVAAAFSGGASLALADVGLALMVTDAIVQAATGNSFMEQALNPIMKAVIEPLIKLLSDAFTKMLEGLGVDSKKAKMIGSILGAIAGALVLVAAVVLVATVGKQAAAKLAENIGKIIGKTLTDLIPKFLKNFSSQLDDLITNAVARLNKFLGAAGDEVISKQIISTHLNQAVLLGESVNSATQAGGSVASAVFQNSASTNLADLTLSKYQVEQLSKYISEAIEKFGQLQEVIADLLASMSNSQANRTDVAKAILQQTTA.

A run of 2 helical transmembrane segments spans residues 313–333 (ILGA…GGAS) and 399–419 (IGSI…VVLV).

Belongs to the SctE/SipB/YopB family. In terms of assembly, the core secretion machinery of the T3SS is composed of approximately 20 different proteins, including cytoplasmic components, a base, an export apparatus and a needle. This subunit is involved in the formation of a pore, called the translocon, in host membrane.

The protein resides in the secreted. The protein localises to the host membrane. In terms of biological role, component of the type III secretion system (T3SS), also called injectisome, which is used to inject bacterial effector proteins into eukaryotic host cells. IpaB/SctE and IpaC/SctB are inserted into the host membrane where they form a pore and allow the translocation of effector proteins into the cytosol of target cells. This is Type 3 secretion system translocon protein SctE from Shigella dysenteriae.